A 365-amino-acid polypeptide reads, in one-letter code: Deoxyribonuclease-2-alpha (365 aa).

A signal peptide spans 1-19 (MATLSSLLLTALLWVPVGT). Cysteines 22 and 162 form a disulfide. N-linked (GlcNAc...) asparagine glycosylation is found at Asn-215, Asn-269, and Asn-293. 2 disulfide bridges follow: Cys-270-Cys-348 and Cys-311-Cys-330. His-298 is a catalytic residue.

The protein belongs to the DNase II family.

The protein resides in the lysosome. The enzyme catalyses Endonucleolytic cleavage to nucleoside 3'-phosphates and 3'-phosphooligonucleotide end-products.. In terms of biological role, hydrolyzes DNA under acidic conditions with a preference for double-stranded DNA. Plays a major role in the clearance of nucleic acids generated through apoptosis, hence preventing autoinflammation. Necessary for proper fetal development and for definitive erythropoiesis in fetal liver and bone marrow, where it degrades nuclear DNA expelled from erythroid precursor cells. In Bos taurus (Bovine), this protein is Deoxyribonuclease-2-alpha (DNASE2).